A 389-amino-acid polypeptide reads, in one-letter code: S-adenosylmethionine synthase (389 aa).

An ATP-binding site is contributed by histidine 15. Aspartate 17 is a binding site for Mg(2+). Residue glutamate 43 coordinates K(+). L-methionine is bound by residues glutamate 56 and glutamine 99. The interval 99–109 (QSPDIAQGVNE) is flexible loop. ATP-binding positions include 166-168 (DAK), 234-235 (RF), aspartate 243, 249-250 (RK), alanine 266, and lysine 270. Residue aspartate 243 coordinates L-methionine. Lysine 274 provides a ligand contact to L-methionine.

This sequence belongs to the AdoMet synthase family. As to quaternary structure, homotetramer; dimer of dimers. Requires Mg(2+) as cofactor. The cofactor is K(+).

The protein localises to the cytoplasm. It catalyses the reaction L-methionine + ATP + H2O = S-adenosyl-L-methionine + phosphate + diphosphate. It functions in the pathway amino-acid biosynthesis; S-adenosyl-L-methionine biosynthesis; S-adenosyl-L-methionine from L-methionine: step 1/1. Functionally, catalyzes the formation of S-adenosylmethionine (AdoMet) from methionine and ATP. The overall synthetic reaction is composed of two sequential steps, AdoMet formation and the subsequent tripolyphosphate hydrolysis which occurs prior to release of AdoMet from the enzyme. This is S-adenosylmethionine synthase from Neisseria meningitidis serogroup C / serotype 2a (strain ATCC 700532 / DSM 15464 / FAM18).